We begin with the raw amino-acid sequence, 432 residues long: Chaperone SurA (432 aa).

The N-terminal stretch at Met-1–Ala-26 is a signal peptide. PpiC domains follow at residues Gln-176–Asp-277 and Val-286–Gly-386.

It localises to the periplasm. It carries out the reaction [protein]-peptidylproline (omega=180) = [protein]-peptidylproline (omega=0). Its function is as follows. Chaperone involved in the correct folding and assembly of outer membrane proteins. Recognizes specific patterns of aromatic residues and the orientation of their side chains, which are found more frequently in integral outer membrane proteins. May act in both early periplasmic and late outer membrane-associated steps of protein maturation. This is Chaperone SurA from Idiomarina loihiensis (strain ATCC BAA-735 / DSM 15497 / L2-TR).